A 549-amino-acid polypeptide reads, in one-letter code: DDB1- and CUL4-associated factor 11 (549 aa).

The segment covering 1-24 (MGSRNSSSAGSGSLEPSEGLSRRG) has biased composition (low complexity). Residues 1 to 40 (MGSRNSSSAGSGSLEPSEGLSRRGAGLRRSEEEEEEDEDV) are disordered. S73 and S75 each carry phosphoserine. Residues 80–89 (DSAWDGRLGD) are compositionally biased toward basic and acidic residues. The segment at 80–100 (DSAWDGRLGDRYNPPVDATPD) is disordered. WD repeat units lie at residues 170-210 (TYSQ…HKFK), 216-258 (DVGW…TALD), 263-302 (ERRF…RTLQ), 305-345 (SHED…EDDP), 353-392 (GHQD…SREG), 435-480 (GVLH…KKLT), and 481-520 (NHKA…YFQD).

Interacts with DDB1 and CUL4A.

The protein operates within protein modification; protein ubiquitination. May function as a substrate receptor for CUL4-DDB1 E3 ubiquitin-protein ligase complex. This Rattus norvegicus (Rat) protein is DDB1- and CUL4-associated factor 11 (Dcaf11).